The primary structure comprises 368 residues: Protein L-Myc (368 aa).

Disordered stretches follow at residues 39–79, 112–179, and 218–295; these read PPTS…RGHS, RLAP…EKRR, and FPPE…FLER. Over residues 135-147 the composition is skewed to polar residues; sequence LEASNPAPATQCQ. Over residues 247-258 the composition is skewed to acidic residues; it reads EEEEEEEEEEEI. A compositionally biased stretch (basic and acidic residues) spans 283–294; the sequence is DVTKRKNHNFLE. The region spanning 285–337 is the bHLH domain; that stretch reads TKRKNHNFLERKRRNDLRSRFLALRDQVPTLASCSKAPKVVILSKALEYLQAL. Residues 337 to 365 are leucine-zipper; the sequence is LVGAEKKMATEKRQLRCRQQQLQKRIAYL.

As to quaternary structure, efficient DNA binding requires dimerization with another bHLH protein. Binds DNA as a heterodimer with MAX.

Its subcellular location is the nucleus. The chain is Protein L-Myc (Mycl) from Mus musculus (Mouse).